We begin with the raw amino-acid sequence, 608 residues long: Mitochondrial import receptor subunit TOM70 (608 aa).

Alanine 2 carries the post-translational modification N-acetylalanine. Topologically, residues 2–38 (AASKPVEAAVVAAAVPSSGSGVGGGGTAGPGTGGLPR) are mitochondrial intermembrane. The helical transmembrane segment at 39–59 (WQLALAVGAPLLLGAGAIYLW) threads the bilayer. Residues 60–608 (SRQQRRREAR…KKYGLKPPTL (549 aa)) are Cytoplasmic-facing. The interval 67 to 107 (EARGRGDASGLKRNSERKTPEGRASPAPGSGHPEGPGAHLD) is disordered. Arginine 71 is subject to Omega-N-methylarginine. Phosphoserine occurs at positions 91, 96, and 110. TPR repeat units lie at residues 114–147 (AQAA…CPTE) and 153–186 (STFY…NPKY). Residue lysine 185 is modified to N6-acetyllysine. Lysine 275 participates in a covalent cross-link: Glycyl lysine isopeptide (Lys-Gly) (interchain with G-Cter in SUMO2). TPR repeat units follow at residues 294–327 (ENSG…EGKY), 329–362 (AEAL…KEAN), 367–400 (ANAL…DPQN), 401–434 (ADVY…RPES), 440–475 (QKCF…FPRC), 476–509 (AEGY…EPDN), 511–544 (TTYV…DNKC), and 545–578 (DFAY…AKSE). Serine 434 carries the post-translational modification Phosphoserine.

Belongs to the Tom70 family. Forms part of the preprotein translocase complex of the outer mitochondrial membrane (TOM complex) which consists of at least 7 different proteins (TOMM5, TOMM6, TOMM7, TOMM20, TOMM22, TOMM40 and TOMM70). Interacts with CAPN8. Interacts with TRADD, TRAF6 and STING. Interacts with MAVS; the interaction is enhanced by Sendai virus infection. Interacts with HSPA8 and HSP90AA1; both interactions are required for preprotein mitochondrial import. The interaction with HSP90AA1 is direct and mediates the association of TOMM70 with IRF3 and TBK1. Upon mitochondrial depolarization, interacts with PINK1; the interaction is required for PINK1-TOM-TIM23 supercomplex formation which is critical for PINK1 stabilization at the outer mitochondrial membrane, kinase activation and downstream mitophagy. In terms of assembly, (Microbial infection) Interacts (via C-terminus) with SARS coronaviru/SARS-CoV and SARS coronavirus-2/SARS-CoV-2 virus protein ORF9b. As to quaternary structure, (Microbial infection) Interacts with parasite T.gondii RH strain MAF1b1; the interaction impairs TOMM70 import activity, enables the parasite to associate with the host mitochondria and facilitates the association of MAF1b1 with MIB complex component SAMM50, promoting the formation of SPOTs (structures positive for outer mitochondrial membrane (OMM)); the interaction is probably indirect.

The protein resides in the mitochondrion outer membrane. Functionally, acts as a receptor of the preprotein translocase complex of the outer mitochondrial membrane (TOM complex). Recognizes and mediates the translocation of mitochondrial preproteins from the cytosol into the mitochondria in a chaperone dependent manner. Mediates TBK1 and IRF3 activation induced by MAVS in response to Sendai virus infection and promotes host antiviral responses during virus infection. Upon Sendai virus infection, recruits HSP90AA1:IRF3:BAX in mitochondrion and the complex induces apoptosis. This Homo sapiens (Human) protein is Mitochondrial import receptor subunit TOM70.